A 406-amino-acid chain; its full sequence is DAZ-associated protein 1 (406 aa).

Methionine 1 is modified (N-acetylmethionine). RRM domains follow at residues 10–97 (GKLF…RTRP) and 113–190 (NKIF…RAEP). The tract at residues 74-117 (TLDGRNIDPKPCTPRGMQPERTRPKEGWQKGPRSDSSKSNKIFV) is disordered. Residues 91–111 (QPERTRPKEGWQKGPRSDSSK) show a composition bias toward basic and acidic residues. Position 150 is an N6-acetyllysine (lysine 150). A disordered region spans residues 186 to 406 (KRAEPRDSKN…NVQGFHPYRR (221 aa)). Over residues 195–207 (NQAPGQPGASQWG) the composition is skewed to polar residues. Residues 247–262 (GPPPAGRGAPPPPPPF) show a composition bias toward pro residues. Arginine 253 carries the omega-N-methylarginine modification. A compositionally biased stretch (low complexity) spans 280 to 294 (FPQGYGAPPQFSFGY). Residues 295 to 315 (GPPPPPPDQFAPPGVPPPPAT) are compositionally biased toward pro residues. Low complexity predominate over residues 363–378 (SDPSQQPPSYGGPSVP). The span at 379–392 (GSGGPPAGGSGFGR) shows a compositional bias: gly residues.

Interacts with DAZ and DAZL. Post-translationally, acetylation at Lys-150 is predominantly observed in the nuclear fraction, and may regulate nucleocytoplasmic transport. In terms of tissue distribution, mainly expressed in testis. Expressed at much lower level in liver, heart and brain. Also expressed in ovary. Expressed throughout testes development, in both the prenatal and postnatal periods.

The protein localises to the cytoplasm. It localises to the nucleus. Functionally, RNA-binding protein, which may be required during spermatogenesis. The polypeptide is DAZ-associated protein 1 (Dazap1) (Mus musculus (Mouse)).